Consider the following 362-residue polypeptide: MNSRVFNFGAGPAMLPEEILKEAQEEFLNWRNTGMSILEIGHRTPEIISLLSTAEQSLRELLNIPKNYHVLFLGGAARAQFAMIPMNLLRPGDDAAYFITGIWSKMAYHEANLLKKAYYLSSEEKEGFVSIPDYQKWELKSNTAYVYYTPNETINGVRFPYVPKTEGVPLVADMTSCLLSEPINIRQYGLIFAGAQKNIANAGLTVVIIHEELLQNQPEPVIPTMLNYKNHADHRSLYATPPVFNCYLASKMFEWIKKQGGIEELFQRNCLKAAKLYQYLDSTDFYLTPVSKEARSIMNVCFSLYYPDLEQKFLDMANERGLKALKGHRFTGGLRASLYNAMPMAGVDALIEFMSEFAKENG.

Arginine 43 lines the L-glutamate pocket. Pyridoxal 5'-phosphate is bound by residues 77–78, tryptophan 103, threonine 153, aspartate 173, and glutamine 196; that span reads AR. N6-(pyridoxal phosphate)lysine is present on lysine 197.

It belongs to the class-V pyridoxal-phosphate-dependent aminotransferase family. SerC subfamily. Homodimer. The cofactor is pyridoxal 5'-phosphate.

The protein resides in the cytoplasm. It carries out the reaction O-phospho-L-serine + 2-oxoglutarate = 3-phosphooxypyruvate + L-glutamate. It catalyses the reaction 4-(phosphooxy)-L-threonine + 2-oxoglutarate = (R)-3-hydroxy-2-oxo-4-phosphooxybutanoate + L-glutamate. It participates in amino-acid biosynthesis; L-serine biosynthesis; L-serine from 3-phospho-D-glycerate: step 2/3. The protein operates within cofactor biosynthesis; pyridoxine 5'-phosphate biosynthesis; pyridoxine 5'-phosphate from D-erythrose 4-phosphate: step 3/5. In terms of biological role, catalyzes the reversible conversion of 3-phosphohydroxypyruvate to phosphoserine and of 3-hydroxy-2-oxo-4-phosphonooxybutanoate to phosphohydroxythreonine. This is Phosphoserine aminotransferase from Legionella pneumophila subsp. pneumophila (strain Philadelphia 1 / ATCC 33152 / DSM 7513).